Reading from the N-terminus, the 219-residue chain is MKVLILLVSLISVCFSQIAPKPIIVGGVYRGGETCNSLQPPYTCSSDDLAGGIMMRQGACTYFRGLSNLPTTYNSSSDGSSVIQYTYSADDYFCQESPIQTQTISNGDCEAGCSNDKISYLYNLSSDSNDQVPKNAVLTIKSQSSNCATDWETTWESIEYLNTDTCIVDEVTGGSFKVSCTQGGMTIYSYAAPGCTNNPKVYGVGFYTDSCDGYQVCSL.

Residues 1–16 form the signal peptide; it reads MKVLILLVSLISVCFS. 2 N-linked (GlcNAc...) asparagine glycosylation sites follow: N74 and N123.

It localises to the secreted. This is Counting factor-associated protein C (cfaC) from Dictyostelium discoideum (Social amoeba).